The primary structure comprises 338 residues: Tetraacyldisaccharide 4'-kinase (338 aa).

Residue 53-60 (TVGGSGKT) coordinates ATP.

The protein belongs to the LpxK family.

It catalyses the reaction a lipid A disaccharide + ATP = a lipid IVA + ADP + H(+). It functions in the pathway glycolipid biosynthesis; lipid IV(A) biosynthesis; lipid IV(A) from (3R)-3-hydroxytetradecanoyl-[acyl-carrier-protein] and UDP-N-acetyl-alpha-D-glucosamine: step 6/6. In terms of biological role, transfers the gamma-phosphate of ATP to the 4'-position of a tetraacyldisaccharide 1-phosphate intermediate (termed DS-1-P) to form tetraacyldisaccharide 1,4'-bis-phosphate (lipid IVA). This Azorhizobium caulinodans (strain ATCC 43989 / DSM 5975 / JCM 20966 / LMG 6465 / NBRC 14845 / NCIMB 13405 / ORS 571) protein is Tetraacyldisaccharide 4'-kinase.